Reading from the N-terminus, the 435-residue chain is Adenylosuccinate synthetase (435 aa).

GTP-binding positions include 11-17 and 39-41; these read GDEGKGK and GHT. The Proton acceptor role is filled by Asp12. The Mg(2+) site is built by Asp12 and Gly39. Residues 12–15, 37–40, Thr128, Arg142, Gln223, Thr238, and Arg302 each bind IMP; these read DEGK and NAGH. His40 acts as the Proton donor in catalysis. 298-304 lines the substrate pocket; the sequence is SVTGRPR. GTP contacts are provided by residues Arg304, 330 to 332, and 412 to 414; these read KLD and STG.

It belongs to the adenylosuccinate synthetase family. In terms of assembly, homodimer. Requires Mg(2+) as cofactor.

It is found in the cytoplasm. It catalyses the reaction IMP + L-aspartate + GTP = N(6)-(1,2-dicarboxyethyl)-AMP + GDP + phosphate + 2 H(+). It participates in purine metabolism; AMP biosynthesis via de novo pathway; AMP from IMP: step 1/2. In terms of biological role, plays an important role in the de novo pathway of purine nucleotide biosynthesis. Catalyzes the first committed step in the biosynthesis of AMP from IMP. The polypeptide is Adenylosuccinate synthetase (Coxiella burnetii (strain RSA 493 / Nine Mile phase I)).